Consider the following 92-residue polypeptide: C-C motif chemokine 4 (92 aa).

Residues Met1–Ser23 form the signal peptide. Cystine bridges form between Cys34–Cys58 and Cys35–Cys74.

The protein belongs to the intercrine beta (chemokine CC) family. As to quaternary structure, homodimer. Interacts with CCR5. In terms of tissue distribution, detected in peripheral blood mononuclear cells and lymph nodes.

The protein localises to the secreted. Functionally, monokine with inflammatory and chemokinetic properties. This is C-C motif chemokine 4 (CCL4) from Macaca mulatta (Rhesus macaque).